The following is a 904-amino-acid chain: Essential for maintenance of the cell wall protein 1 (904 aa).

6 TPR repeats span residues 510 to 544, 563 to 596, 603 to 636, 637 to 670, 671 to 704, and 706 to 739; these read WQLD…ETAL, INEN…GKYV, AKYY…YPLS, FETW…DPYH, ALSW…DAQK, and WKIW…RRDK.

The protein belongs to the TTC27 family.

The protein resides in the cytoplasm. Its subcellular location is the nucleus. In terms of biological role, required for the maintenance of the cell wall integrity. This chain is Essential for maintenance of the cell wall protein 1 (EMW1), found in Saccharomyces cerevisiae (strain ATCC 204508 / S288c) (Baker's yeast).